Reading from the N-terminus, the 256-residue chain is UPF0280 protein MTH_727 (256 aa).

It belongs to the UPF0280 family.

In Methanothermobacter thermautotrophicus (strain ATCC 29096 / DSM 1053 / JCM 10044 / NBRC 100330 / Delta H) (Methanobacterium thermoautotrophicum), this protein is UPF0280 protein MTH_727.